The following is a 368-amino-acid chain: DNA replication and repair protein RecF (368 aa).

30–37 (GRNGSGKT) contacts ATP.

Belongs to the RecF family.

It is found in the cytoplasm. In terms of biological role, the RecF protein is involved in DNA metabolism; it is required for DNA replication and normal SOS inducibility. RecF binds preferentially to single-stranded, linear DNA. It also seems to bind ATP. The protein is DNA replication and repair protein RecF of Chlorobaculum tepidum (strain ATCC 49652 / DSM 12025 / NBRC 103806 / TLS) (Chlorobium tepidum).